A 963-amino-acid polypeptide reads, in one-letter code: Spliceosome associated factor 3, U4/U6 recycling protein (963 aa).

Over residues 1–11 (MATAAETSASE) the composition is skewed to low complexity. Disordered regions lie at residues 1–36 (MATA…RTRR) and 50–90 (TMGP…YDEE). Ala2 is modified (N-acetylalanine). The mediates interaction with PRPF3 stretch occupies residues 2-351 (ATAAETSASE…LVPDLWIRYS (350 aa)). Phosphoserine occurs at positions 10 and 16. The segment covering 14-23 (AESKAGPKAD) has biased composition (basic and acidic residues). The stretch at 21 to 46 (KADGEEDEVKAARTRRKVLSRAVAAA) forms a coiled coil. Residues 57–69 (QQEEGVSESDGDE) are compositionally biased toward acidic residues. Positions 82 to 110 (EYEWEYDEEEEKNQLEIERLEEQLSINVY) form a coiled coil. HAT repeat units lie at residues 126–158 (GELT…DEIS), 164–195 (LDRE…YSVG), 201–237 (GGLE…FESA), 242–275 (ARLE…WSED), 324–356 (GDPA…YLDR), 359–391 (KVKD…AMER), 394–430 (VDHQ…YLRR), and 487–520 (NNMQ…LERA). The residue at position 215 (Ser215) is a Phosphoserine. Positions 487–520 (NNMQKARELWDSIMTRGNAKYANMWLEYYNLERA) are required for interaction with USP4. The interval 537 to 953 (CTSDYPEHVC…AATEAPKMSN (417 aa)) is necessary and sufficient for U6 snRNA binding. A coiled-coil region spans residues 559–619 (LEDWDIAVQK…ALKKKKKIRG (61 aa)). Basic and acidic residues predominate over residues 590 to 601 (LVQQEEEKAEQR). The interval 590–694 (LVQQEEEKAE…AASLKRDMPK (105 aa)) is disordered. A required for nuclear localization region spans residues 600-670 (QRKRARAEKK…EVAAGPAGKC (71 aa)). The Nuclear localization signal motif lies at 601 to 608 (RKRARAEK). The segment covering 602–617 (KRARAEKKALKKKKKI) has biased composition (basic residues). Residues 626-639 (DEDDEKEWGDDEEE) are compositionally biased toward acidic residues. Phosphoserine is present on Ser650. Thr657 is subject to Phosphothreonine. Residues 677–694 (PPSKQKEKAASLKRDMPK) are compositionally biased toward basic and acidic residues. Positions 704-782 (ITVFVSNLPY…RPMFVSPCVD (79 aa)) constitute an RRM 1 domain. Ser769, Ser795, and Ser852 each carry phosphoserine. The region spanning 801–878 (HKLFISGLPF…NIIKVAISNP (78 aa)) is the RRM 2 domain. The segment at 878–898 (PPQRKVPEKPETRKAPGGPML) is disordered. A compositionally biased stretch (basic and acidic residues) spans 882 to 891 (KVPEKPETRK). Omega-N-methylarginine is present on Arg906. The tract at residues 920–948 (LQRPSAAAPQAENGPAAAPAVAAPAATEA) is disordered. Over residues 925–948 (AAAPQAENGPAAAPAVAAPAATEA) the composition is skewed to low complexity.

As to quaternary structure, component of the 7SK snRNP complex at least composed of P-TEFb (composed of CDK9 and CCNT1/cyclin-T1), HEXIM1, HEXIM2, BCDIN3, SART3 proteins and 7SK and U6 snRNAs. Interacts with AGO1 and AGO2. Interacts with PRPF3 and USP4; the interaction with PRPF3 is direct and recruits USP4 to its substrate PRPF3. Interacts with USP15; the interaction is direct. Interacts with HIV-1 Tat. Ubiquitously expressed.

Its subcellular location is the nucleus. The protein resides in the nucleoplasm. The protein localises to the cajal body. It localises to the nucleus speckle. It is found in the cytoplasm. Functionally, U6 snRNP-binding protein that functions as a recycling factor of the splicing machinery. Promotes the initial reassembly of U4 and U6 snRNPs following their ejection from the spliceosome during its maturation. Also binds U6atac snRNPs and may function as a recycling factor for U4atac/U6atac spliceosomal snRNP, an initial step in the assembly of U12-type spliceosomal complex. The U12-type spliceosomal complex plays a role in the splicing of introns with non-canonical splice sites. May also function as a substrate-targeting factor for deubiquitinases like USP4 and USP15. Recruits USP4 to ubiquitinated PRPF3 within the U4/U5/U6 tri-snRNP complex, promoting PRPF3 deubiquitination and thereby regulating the spliceosome U4/U5/U6 tri-snRNP spliceosomal complex disassembly. May also recruit the deubiquitinase USP15 to histone H2B and mediate histone deubiquitination, thereby regulating gene expression and/or DNA repair. May play a role in hematopoiesis probably through transcription regulation of specific genes including MYC. Its function is as follows. Regulates Tat transactivation activity through direct interaction. May be a cellular factor for HIV-1 gene expression and viral replication. The polypeptide is Spliceosome associated factor 3, U4/U6 recycling protein (Homo sapiens (Human)).